The following is a 47-amino-acid chain: Short neurotoxin D2A (47 aa).

2 cysteine pairs are disulfide-bonded: cysteine 3–cysteine 24 and cysteine 17–cysteine 39.

Expressed by the venom gland.

It is found in the secreted. This chain is Short neurotoxin D2A, found in Micrurus pyrrhocryptus (Coral snake).